The sequence spans 184 residues: dCTP deaminase (184 aa).

DCTP contacts are provided by residues 107-112 (KSTYAR), 131-133 (TLE), Q152, Y166, and Q176. E133 (proton donor/acceptor) is an active-site residue.

Belongs to the dCTP deaminase family. As to quaternary structure, homotrimer.

The enzyme catalyses dCTP + H2O + H(+) = dUTP + NH4(+). The protein operates within pyrimidine metabolism; dUMP biosynthesis; dUMP from dCTP (dUTP route): step 1/2. In terms of biological role, catalyzes the deamination of dCTP to dUTP. The polypeptide is dCTP deaminase (Erythrobacter litoralis (strain HTCC2594)).